A 272-amino-acid polypeptide reads, in one-letter code: HMP-PP phosphatase (272 aa).

D8 serves as the catalytic Nucleophile. Mg(2+) contacts are provided by D8, D10, and D212.

This sequence belongs to the HAD-like hydrolase superfamily. Cof family. The cofactor is Mg(2+).

The catalysed reaction is 4-amino-2-methyl-5-(diphosphooxymethyl)pyrimidine + H2O = 4-amino-2-methyl-5-(phosphooxymethyl)pyrimidine + phosphate + H(+). Its function is as follows. Catalyzes the hydrolysis of 4-amino-2-methyl-5-hydroxymethylpyrimidine pyrophosphate (HMP-PP) to 4-amino-2-methyl-5-hydroxymethylpyrimidine phosphate (HMP-P). This is HMP-PP phosphatase from Escherichia coli O8 (strain IAI1).